The following is a 353-amino-acid chain: S-adenosylmethionine:tRNA ribosyltransferase-isomerase (353 aa).

The protein belongs to the QueA family. Monomer.

It is found in the cytoplasm. It carries out the reaction 7-aminomethyl-7-carbaguanosine(34) in tRNA + S-adenosyl-L-methionine = epoxyqueuosine(34) in tRNA + adenine + L-methionine + 2 H(+). It participates in tRNA modification; tRNA-queuosine biosynthesis. Functionally, transfers and isomerizes the ribose moiety from AdoMet to the 7-aminomethyl group of 7-deazaguanine (preQ1-tRNA) to give epoxyqueuosine (oQ-tRNA). The sequence is that of S-adenosylmethionine:tRNA ribosyltransferase-isomerase from Burkholderia vietnamiensis (strain G4 / LMG 22486) (Burkholderia cepacia (strain R1808)).